The sequence spans 553 residues: HTH-type transcriptional regulator SgrR (553 aa).

Residues 1–117 enclose the HTH marR-type domain; that stretch reads MSTARLQQQF…LSQLGRSFRQ (117 aa). Residues 26 to 49 constitute a DNA-binding region (H-T-H motif); it reads LQELAEVLCCSRRHVRSLLGSMQQ. Residues 163–494 are solute-binding; that stretch reads ELEPDLSHHW…EELHQDVELW (332 aa).

Its function is as follows. Activates the small RNA gene sgrS under glucose-phosphate stress conditions as well as yfdZ. Represses its own transcription under both stress and non-stress conditions. Might act as a sensor of the intracellular accumulation of phosphoglucose by binding these molecules in its C-terminal solute-binding domain. This Yersinia enterocolitica serotype O:8 / biotype 1B (strain NCTC 13174 / 8081) protein is HTH-type transcriptional regulator SgrR.